A 508-amino-acid chain; its full sequence is Protein MGF 505-9R (508 aa).

ANK repeat units follow at residues 54 to 83 (SINLAIKIAAAEGNEEIVKLLLLWGGNLHY), 253 to 282 (QVDTVLFQAVKYNHRKILAYFIHETPRKTV), and 313 to 343 (IIKKLLYAVVKHKYMLVIKLLLERPKKKINL).

Belongs to the asfivirus MGF 505 family.

Plays a role in virus cell tropism, and may be required for efficient virus replication in macrophages. The sequence is that of Protein MGF 505-9R from Ornithodoros (relapsing fever ticks).